The primary structure comprises 190 residues: Frataxin homolog, mitochondrial (190 aa).

The protein belongs to the frataxin family. In terms of assembly, monomer (probable predominant form). Oligomer. Interacts with IscU. Component of the mitochondrial core iron-sulfur cluster (ISC) assembly complex at least composed of the cysteine desulfurase Nfs1, the scaffold protein IscU, the accessory protein bcn92/Isd11/Lyrm4, and probably fh/frataxin.

The protein resides in the mitochondrion. It catalyses the reaction 4 Fe(2+) + O2 + 4 H(+) = 4 Fe(3+) + 2 H2O. Promotes the biosynthesis of heme as well as the assembly and repair of iron-sulfur clusters by delivering Fe(2+) to proteins involved in these pathways. May play a role in the protection against iron-catalyzed oxidative stress through its ability to catalyze the oxidation of Fe(2+) to Fe(3+). May be able to store large amounts of the metal in the form of a ferrihydrite mineral by oligomerization. Required for ecdysteroidogenesis in the prothoracic gland which is necessary for larval to pupal transition. This is Frataxin homolog, mitochondrial from Drosophila melanogaster (Fruit fly).